The primary structure comprises 156 residues: Small ribosomal subunit protein uS7 (156 aa).

The protein belongs to the universal ribosomal protein uS7 family. Part of the 30S ribosomal subunit. Contacts proteins S9 and S11.

In terms of biological role, one of the primary rRNA binding proteins, it binds directly to 16S rRNA where it nucleates assembly of the head domain of the 30S subunit. Is located at the subunit interface close to the decoding center, probably blocks exit of the E-site tRNA. This chain is Small ribosomal subunit protein uS7, found in Chelativorans sp. (strain BNC1).